Reading from the N-terminus, the 550-residue chain is CCR4-NOT transcription complex subunit 6-like-A (550 aa).

The interval 1-148 (MPKEKYDPPD…LYQEPDGMRK (148 aa)) is required for interaction with cnot1, cnot3 and cnot7. LRR repeat units lie at residues 52–73 (HLTVLHLSDNNLSRIPPDIAKL), 75–96 (NLVYLDLSSNKLRSLPAELGNV), 98–120 (SLRELLLNNNLLRVLPFELGRLF), and 121–143 (RLQTLGLKGNPLSQDILSLYQEP). The interval 153-550 (MLDNLSVHPE…INGVHLPSRR (398 aa)) is nuclease domain. Glu235 provides a ligand contact to Mg(2+). Positions 235, 271, 355, and 360 each coordinate substrate. Mg(2+) is bound at residue Asp405. The active-site Proton donor/acceptor is Asp405. Residues Asn407, Asn474, and Phe479 each contribute to the substrate site.

It belongs to the CCR4/nocturin family. As to quaternary structure, component of the CCR4-NOT complex. It depends on Mg(2+) as a cofactor.

The protein resides in the cytoplasm. Its subcellular location is the nucleus. It carries out the reaction Exonucleolytic cleavage of poly(A) to 5'-AMP.. Functionally, poly(A) nuclease with 3'-5' RNase activity. Catalytic component of the CCR4-NOT complex which is one of the major cellular mRNA deadenylases and is linked to various cellular processes including bulk mRNA degradation, miRNA-mediated repression, translational repression during translational initiation and general transcription regulation. Additional complex functions may be a consequence of its influence on mRNA expression. The chain is CCR4-NOT transcription complex subunit 6-like-A (cnot6l-a) from Xenopus laevis (African clawed frog).